The following is a 101-amino-acid chain: Small ribosomal subunit protein uS14 (101 aa).

Residues 1 to 10 (MAKKSSIEKN) are compositionally biased toward basic and acidic residues. Positions 1-23 (MAKKSSIEKNNRRRKMTKNAAPK) are disordered. Residues 11–23 (NRRRKMTKNAAPK) show a composition bias toward basic residues.

The protein belongs to the universal ribosomal protein uS14 family. Part of the 30S ribosomal subunit. Contacts proteins S3 and S10.

Its function is as follows. Binds 16S rRNA, required for the assembly of 30S particles and may also be responsible for determining the conformation of the 16S rRNA at the A site. This is Small ribosomal subunit protein uS14 from Rhodopseudomonas palustris (strain BisB5).